Here is a 256-residue protein sequence, read N- to C-terminus: Ciliary microtubule associated protein 1A (256 aa).

3 STPGR repeats span residues 66 to 92, 181 to 206, and 217 to 242; these read PGPG…IYGR, PGPG…MTAR, and PGPG…FGIR. Residues 91-115 form a disordered region; sequence GRPRDISSFRTPGPGSYSPERAGKS.

It belongs to the CIMAP family.

The protein localises to the cytoplasm. Its subcellular location is the cytoskeleton. It is found in the flagellum axoneme. In terms of biological role, outer dense fibers are filamentous structures located on the outside of the axoneme in the midpiece and principal piece of the mammalian sperm tail. May help to maintain the passive elastic structures and elastic recoil of the sperm tail. This chain is Ciliary microtubule associated protein 1A (cimap1a), found in Xenopus laevis (African clawed frog).